We begin with the raw amino-acid sequence, 536 residues long: Pre-mRNA-splicing factor SLU7-B (536 aa).

The tract at residues 1–42 (MATASVAFKSREDHRKKLELEEARKAGLAPAEVDEDGKEINP) is disordered. The span at 9-25 (KSREDHRKKLELEEARK) shows a compositional bias: basic and acidic residues. A CCHC-type zinc finger spans residues 96–109 (CINCGAMTHSSKAC). Disordered stretches follow at residues 176 to 201 (LKKLEEKNNNENGDDATSDGEEDLDD) and 488 to 507 (KEDLSRREEKDERKRKYNVN). The span at 187–200 (NGDDATSDGEEDLD) shows a compositional bias: acidic residues. Ser-193 is subject to Phosphoserine. Residues 486–493 (LKKEDLSR) carry the Nuclear localization signal motif. Residues 488–501 (KEDLSRREEKDERK) are compositionally biased toward basic and acidic residues.

This sequence belongs to the SLU7 family. In terms of assembly, interacts with PHYB in photobodies under red light.

The protein resides in the nucleus. Its function is as follows. Participates in the second catalytic step of pre-mRNA splicing, when the free hydroxyl group of exon I attacks the 3'-splice site to generate spliced mRNA and the excised lariat intron. Splicing factor acting as a negative regulator of seedling photomorphogenesis by antagonizing PHYB signaling to promote light-induced hypocotyl elongation. Prevents the accumulation of functionally spliced RVE8a form, a circadian clock regulator mediating the transcriptional activation of clock genes containing evening elements (EE), but promotes PIF4 expression to fine-tune hypocotyl elongation in the light. Together with SMP1, involved in the timing of cell cycle arrest during leaf development, in a STRUWWELPETER (SWP) dependent manner; promotes cell proliferation in developing organs. In Arabidopsis thaliana (Mouse-ear cress), this protein is Pre-mRNA-splicing factor SLU7-B.